Consider the following 575-residue polypeptide: Alpha-(1,6)-fucosyltransferase (575 aa).

Over 1–9 (MRPWTGSWR) the chain is Cytoplasmic. A helical; Signal-anchor for type II membrane protein transmembrane segment spans residues 10 to 30 (WIMLILFAWGTLLFYIGGHLV). The Lumenal portion of the chain corresponds to 31-575 (RDNDHPDHSS…KVPHVPEAEK (545 aa)). 3 cysteine pairs are disulfide-bonded: Cys204-Cys266, Cys212-Cys230, and Cys218-Cys222. Residues 206-493 (KAKKLVCNIN…PDASANFHSL (288 aa)) enclose the GT23 domain. Position 278 is a phosphoserine (Ser278). Residues 299–305 (PRPPYLP) carry the SH3-binding motif. The segment at 365-366 (RR) is important for donor substrate binding. An intrachain disulfide couples Cys465 to Cys472. Residues 502–563 (QNAHNQIAIY…PSYKVREKIE (62 aa)) form the SH3 domain.

This sequence belongs to the glycosyltransferase 23 family. Tyrosine phosphorylated by PKDCC/VLK. In terms of tissue distribution, highest expression found in brain. Also found in heart, lung, spleen and kidney.

It is found in the golgi apparatus. It localises to the golgi stack membrane. The catalysed reaction is N(4)-{beta-D-GlcNAc-(1-&gt;2)-alpha-D-Man-(1-&gt;3)-[beta-D-GlcNAc-(1-&gt;2)-alpha-D-Man-(1-&gt;6)]-beta-D-Man-(1-&gt;4)-beta-D-GlcNAc-(1-&gt;4)-beta-D-GlcNAc}-L-asparaginyl-[protein] + GDP-beta-L-fucose = an N(4)-{beta-D-GlcNAc-(1-&gt;2)-alpha-D-Man-(1-&gt;3)-[beta-D-GlcNAc-(1-&gt;2)-alpha-D-Man-(1-&gt;6)]-beta-D-Man-(1-&gt;4)-beta-D-GlcNAc-(1-&gt;4)-[alpha-L-Fuc-(1-&gt;6)]-beta-D-GlcNAc}-L-asparaginyl-[protein] + GDP + H(+). It participates in protein modification; protein glycosylation. Functionally, catalyzes the addition of fucose in alpha 1-6 linkage to the first GlcNAc residue, next to the peptide chains in N-glycans. This Bos taurus (Bovine) protein is Alpha-(1,6)-fucosyltransferase (FUT8).